The primary structure comprises 70 residues: MMQIKYLFALFAVLMLVVLGANEADADCLSGRYKGPCAVWDNETCRRVCKEEGRSSGHCSPSLKCWCEGC.

The first 20 residues, 1-20 (MMQIKYLFALFAVLMLVVLG), serve as a signal peptide directing secretion. Positions 21-26 (ANEADA) are excised as a propeptide. 4 disulfide bridges follow: C28–C70, C37–C59, C45–C65, and C49–C67. A glycan (N-linked (GlcNAc...) asparagine) is linked at N42.

As to expression, hemolymph (at protein level). Synthesized in the fat body and is secreted into the blood. In larvae, expressed in the visceral branches and posterior spiracles of the trachea.

It localises to the secreted. Functionally, possesses antifungal activity and is active against a relatively broad spectrum of filamentous fungi. It inhibits spore germination at high concentrations and at low concentrations delays growth of hyphae which subsequently exhibit abnormal morphology. Spz C-106 in the hemolymph controls expression of the antifungal peptide by acting as a ligand of Tl and inducing an intracellular signaling pathway. Part of a psh-dependent Toll pathway, which may function in activating the systematic immune response in response to localized melanization of the tracheal system. This is Drosomycin (Drs) from Drosophila melanogaster (Fruit fly).